Consider the following 115-residue polypeptide: U17-barytoxin-Tl1b (115 aa).

An N-terminal signal peptide occupies residues 1–20 (MKTIIVFLSLLVLATKFGDA). Positions 21–74 (KEGVNQKQKKEVTQNEFREEYLNEMAAMSLVQQLEAIERALFENEAGRNSRQKR) are excised as a propeptide. 3 disulfides stabilise this stretch: Cys75-Cys89, Cys82-Cys94, and Cys88-Cys109.

The protein belongs to the neurotoxin 14 (magi-1) family. 03 (ICK-30-40) subfamily. As to expression, expressed by the venom gland.

Its subcellular location is the secreted. Its function is as follows. Ion channel inhibitor. The polypeptide is U17-barytoxin-Tl1b (Trittame loki (Brush-footed trapdoor spider)).